A 247-amino-acid polypeptide reads, in one-letter code: ATP synthase subunit a, chloroplastic (247 aa).

5 helical membrane-spanning segments follow: residues Gln-38–Val-58, Val-95–Leu-115, Ile-134–Ser-154, Leu-199–Leu-219, and Gly-220–Gly-240.

This sequence belongs to the ATPase A chain family. As to quaternary structure, F-type ATPases have 2 components, CF(1) - the catalytic core - and CF(0) - the membrane proton channel. CF(1) has five subunits: alpha(3), beta(3), gamma(1), delta(1), epsilon(1). CF(0) has four main subunits: a, b, b' and c.

Its subcellular location is the plastid. It is found in the chloroplast thylakoid membrane. In terms of biological role, key component of the proton channel; it plays a direct role in the translocation of protons across the membrane. This chain is ATP synthase subunit a, chloroplastic, found in Zea mays (Maize).